We begin with the raw amino-acid sequence, 443 residues long: Chromosomal replication initiator protein DnaA (443 aa).

A domain I, interacts with DnaA modulators region spans residues 1 to 76 (MMDAWPRCLE…GNGEVALAVG (76 aa)). Residues 76 to 105 (GSRPRAPEPAPAPVAATIAPQAAPIAPFAG) form a domain II region. The segment at 106–323 (NLDSHYTFAN…GALNTLVARA (218 aa)) is domain III, AAA+ region. ATP is bound by residues G151, G153, K154, and T155. Residues 324-443 (NFTGRSITVE…WEKLIRKLSE (120 aa)) form a domain IV, binds dsDNA region.

This sequence belongs to the DnaA family. Oligomerizes as a right-handed, spiral filament on DNA at oriC.

It is found in the cytoplasm. Plays an essential role in the initiation and regulation of chromosomal replication. ATP-DnaA binds to the origin of replication (oriC) to initiate formation of the DNA replication initiation complex once per cell cycle. Binds the DnaA box (a 9 base pair repeat at the origin) and separates the double-stranded (ds)DNA. Forms a right-handed helical filament on oriC DNA; dsDNA binds to the exterior of the filament while single-stranded (ss)DNA is stabiized in the filament's interior. The ATP-DnaA-oriC complex binds and stabilizes one strand of the AT-rich DNA unwinding element (DUE), permitting loading of DNA polymerase. After initiation quickly degrades to an ADP-DnaA complex that is not apt for DNA replication. Binds acidic phospholipids. The protein is Chromosomal replication initiator protein DnaA of Xanthomonas oryzae pv. oryzae (strain KACC10331 / KXO85).